The chain runs to 147 residues: Cyanate hydratase (147 aa).

Active-site residues include Arg-88, Glu-91, and Ser-114.

This sequence belongs to the cyanase family.

The enzyme catalyses cyanate + hydrogencarbonate + 3 H(+) = NH4(+) + 2 CO2. Catalyzes the reaction of cyanate with bicarbonate to produce ammonia and carbon dioxide. This is Cyanate hydratase from Polynucleobacter asymbioticus (strain DSM 18221 / CIP 109841 / QLW-P1DMWA-1) (Polynucleobacter necessarius subsp. asymbioticus).